Consider the following 509-residue polypeptide: Inositol-3-phosphate synthase 1 (509 aa).

Belongs to the myo-inositol 1-phosphate synthase family. The cofactor is NAD(+). Highly expressed in anthers, but transcripts are undetectable in roots, leaves, flowers and embryos.

The protein resides in the cytoplasm. The catalysed reaction is D-glucose 6-phosphate = 1D-myo-inositol 3-phosphate. It functions in the pathway polyol metabolism; myo-inositol biosynthesis; myo-inositol from D-glucose 6-phosphate: step 1/2. In terms of biological role, key enzyme in myo-inositol biosynthesis pathway that catalyzes the conversion of glucose 6-phosphate to 1-myo-inositol 1-phosphate in a NAD-dependent manner. Is a key enzyme in the phytic acid biosynthesis pathway in seeds. This chain is Inositol-3-phosphate synthase 1, found in Oryza sativa subsp. japonica (Rice).